The sequence spans 114 residues: MDPVDPEVPPWHHPGSQPQIPCNNCYCKRCCYHCYVCFVRKGLGISYGRKKRGRPAAASHPDHKDPVPKQSPTITKRKQERQEEQEEEVEKKAGPGGYPRRKGSCHCCTRTSEQ.

The interaction with human CREBBP stretch occupies residues 1–24 (MDPVDPEVPPWHHPGSQPQIPCNN). The interval 1-48 (MDPVDPEVPPWHHPGSQPQIPCNNCYCKRCCYHCYVCFVRKGLGISYG) is transactivation. Positions 22, 25, and 27 each coordinate Zn(2+). The segment at 22 to 37 (CNNCYCKRCCYHCYVC) is cysteine-rich. An N6-acetyllysine; by host PCAF modification is found at Lys28. 4 residues coordinate Zn(2+): Cys30, His33, Cys34, and Cys37. A core region spans residues 38 to 48 (FVRKGLGISYG). The interval 48–114 (GRKKRGRPAA…CHCCTRTSEQ (67 aa)) is disordered. Positions 49 to 56 (RKKRGRPA) match the Nuclear localization signal, RNA-binding (TAR), and protein transduction motif. The segment at 49-84 (RKKRGRPAAASHPDHKDPVPKQSPTITKRKQERQEE) is interaction with the host capping enzyme RNGTT. N6-acetyllysine; by host EP300 and GCN5L2 is present on residues Lys50 and Lys51. Arg52 carries the post-translational modification Asymmetric dimethylarginine; by host PRMT6. A Glycyl lysine isopeptide (Lys-Gly) (interchain with G-Cter in ubiquitin) cross-link involves residue Lys69.

Belongs to the lentiviruses Tat family. Interacts with host CCNT1. Associates with the P-TEFb complex composed at least of Tat, P-TEFb (CDK9 and CCNT1), TAR RNA, RNA Pol II. Recruits the HATs CREBBP, TAF1/TFIID, EP300, PCAF and GCN5L2. Interacts with host KAT5/Tip60; this interaction targets the latter to degradation. Interacts with the host deacetylase SIRT1. Interacts with host capping enzyme RNGTT; this interaction stimulates RNGTT. Binds to host KDR, and to the host integrins ITGAV/ITGB3 and ITGA5/ITGB1. Interacts with host KPNB1/importin beta-1 without previous binding to KPNA1/importin alpha-1. Interacts with EIF2AK2. Interacts with host nucleosome assembly protein NAP1L1; this interaction may be required for the transport of Tat within the nucleus, since the two proteins interact at the nuclear rim. Interacts with host C1QBP/SF2P32; this interaction involves lysine-acetylated Tat. Interacts with the host chemokine receptors CCR2, CCR3 and CXCR4. Interacts with host DPP4/CD26; this interaction may trigger an anti-proliferative effect. Interacts with host LDLR. Interacts with the host extracellular matrix metalloproteinase MMP1. Interacts with host PRMT6; this interaction mediates Tat's methylation. Interacts with, and is ubiquitinated by MDM2/Hdm2. Interacts with host PSMC3 and HTATIP2. Interacts with STAB1; this interaction may overcome SATB1-mediated repression of IL2 and IL2RA (interleukin) in T cells by binding to the same domain than HDAC1. Interacts (when acetylated) with human CDK13, thereby increasing HIV-1 mRNA splicing and promoting the production of the doubly spliced HIV-1 protein Nef. Interacts with host TBP; this interaction modulates the activity of transcriptional pre-initiation complex. Interacts with host RELA. Interacts with host PLSCR1; this interaction negatively regulates Tat transactivation activity by altering its subcellular distribution. In terms of processing, asymmetrical arginine methylation by host PRMT6 seems to diminish the transactivation capacity of Tat and affects the interaction with host CCNT1. Acetylation by EP300, CREBBP, GCN5L2/GCN5 and PCAF regulates the transactivation activity of Tat. EP300-mediated acetylation of Lys-50 promotes dissociation of Tat from the TAR RNA through the competitive binding to PCAF's bromodomain. In addition, the non-acetylated Tat's N-terminus can also interact with PCAF. PCAF-mediated acetylation of Lys-28 enhances Tat's binding to CCNT1. Lys-50 is deacetylated by SIRT1. Post-translationally, polyubiquitination by host MDM2 does not target Tat to degradation, but activates its transactivation function and fosters interaction with CCNT1 and TAR RNA. In terms of processing, phosphorylated by EIF2AK2 on serine and threonine residues adjacent to the basic region important for TAR RNA binding and function. Phosphorylation of Tat by EIF2AK2 is dependent on the prior activation of EIF2AK2 by dsRNA.

Its subcellular location is the host nucleus. It localises to the host nucleolus. The protein localises to the host cytoplasm. The protein resides in the secreted. Transcriptional activator that increases RNA Pol II processivity, thereby increasing the level of full-length viral transcripts. Recognizes a hairpin structure at the 5'-LTR of the nascent viral mRNAs referred to as the transactivation responsive RNA element (TAR) and recruits the cyclin T1-CDK9 complex (P-TEFb complex) that will in turn hyperphosphorylate the RNA polymerase II to allow efficient elongation. The CDK9 component of P-TEFb and other Tat-activated kinases hyperphosphorylate the C-terminus of RNA Pol II that becomes stabilized and much more processive. Other factors such as HTATSF1/Tat-SF1, SUPT5H/SPT5, and HTATIP2 are also important for Tat's function. Besides its effect on RNA Pol II processivity, Tat induces chromatin remodeling of proviral genes by recruiting the histone acetyltransferases (HATs) CREBBP, EP300 and PCAF to the chromatin. This also contributes to the increase in proviral transcription rate, especially when the provirus integrates in transcriptionally silent region of the host genome. To ensure maximal activation of the LTR, Tat mediates nuclear translocation of NF-kappa-B by interacting with host RELA. Through its interaction with host TBP, Tat may also modulate transcription initiation. Tat can reactivate a latently infected cell by penetrating in it and transactivating its LTR promoter. In the cytoplasm, Tat is thought to act as a translational activator of HIV-1 mRNAs. In terms of biological role, extracellular circulating Tat can be endocytosed by surrounding uninfected cells via the binding to several surface receptors such as CD26, CXCR4, heparan sulfate proteoglycans (HSPG) or LDLR. Neurons are rarely infected, but they internalize Tat via their LDLR. Through its interaction with nuclear HATs, Tat is potentially able to control the acetylation-dependent cellular gene expression. Modulates the expression of many cellular genes involved in cell survival, proliferation or in coding for cytokines or cytokine receptors. Tat plays a role in T-cell and neurons apoptosis. Tat induced neurotoxicity and apoptosis probably contribute to neuroAIDS. Circulating Tat also acts as a chemokine-like and/or growth factor-like molecule that binds to specific receptors on the surface of the cells, affecting many cellular pathways. In the vascular system, Tat binds to ITGAV/ITGB3 and ITGA5/ITGB1 integrins dimers at the surface of endothelial cells and competes with bFGF for heparin-binding sites, leading to an excess of soluble bFGF. The chain is Protein Tat from Homo sapiens (Human).